The following is a 125-amino-acid chain: MPTINQLVRQGREVEKIKSKSPAMENSPQRRGVCTRVYTTTPKKPNSALRKVAKVRLTNGFEIISYIGGEGHNLQEHSVVLVRGGRVKDLPGVRYHIVRGSLDLQGVKDRKQSRSKYGAKRPKKA.

The segment at 9 to 31 (RQGREVEKIKSKSPAMENSPQRR) is disordered. Asp-89 is subject to 3-methylthioaspartic acid. Residues 106 to 125 (GVKDRKQSRSKYGAKRPKKA) are disordered. The span at 113 to 125 (SRSKYGAKRPKKA) shows a compositional bias: basic residues.

This sequence belongs to the universal ribosomal protein uS12 family. In terms of assembly, part of the 30S ribosomal subunit. Contacts proteins S8 and S17. May interact with IF1 in the 30S initiation complex.

With S4 and S5 plays an important role in translational accuracy. Functionally, interacts with and stabilizes bases of the 16S rRNA that are involved in tRNA selection in the A site and with the mRNA backbone. Located at the interface of the 30S and 50S subunits, it traverses the body of the 30S subunit contacting proteins on the other side and probably holding the rRNA structure together. The combined cluster of proteins S8, S12 and S17 appears to hold together the shoulder and platform of the 30S subunit. This is Small ribosomal subunit protein uS12 from Polaromonas sp. (strain JS666 / ATCC BAA-500).